Reading from the N-terminus, the 220-residue chain is Ribosomal RNA small subunit methyltransferase G 1 (220 aa).

S-adenosyl-L-methionine is bound by residues G79, F84, and R150.

It belongs to the methyltransferase superfamily. RNA methyltransferase RsmG family.

The protein localises to the cytoplasm. The catalysed reaction is guanosine(527) in 16S rRNA + S-adenosyl-L-methionine = N(7)-methylguanosine(527) in 16S rRNA + S-adenosyl-L-homocysteine. In terms of biological role, specifically methylates the N7 position of guanine in position 527 of 16S rRNA. This chain is Ribosomal RNA small subunit methyltransferase G 1, found in Syntrophobacter fumaroxidans (strain DSM 10017 / MPOB).